Consider the following 245-residue polypeptide: 1-(5-phosphoribosyl)-5-[(5-phosphoribosylamino)methylideneamino] imidazole-4-carboxamide isomerase (245 aa).

Asp8 functions as the Proton acceptor in the catalytic mechanism. The active-site Proton donor is Asp130.

Belongs to the HisA/HisF family.

Its subcellular location is the cytoplasm. It catalyses the reaction 1-(5-phospho-beta-D-ribosyl)-5-[(5-phospho-beta-D-ribosylamino)methylideneamino]imidazole-4-carboxamide = 5-[(5-phospho-1-deoxy-D-ribulos-1-ylimino)methylamino]-1-(5-phospho-beta-D-ribosyl)imidazole-4-carboxamide. It participates in amino-acid biosynthesis; L-histidine biosynthesis; L-histidine from 5-phospho-alpha-D-ribose 1-diphosphate: step 4/9. This Pseudomonas syringae pv. tomato (strain ATCC BAA-871 / DC3000) protein is 1-(5-phosphoribosyl)-5-[(5-phosphoribosylamino)methylideneamino] imidazole-4-carboxamide isomerase.